A 600-amino-acid polypeptide reads, in one-letter code: MVNNMTDLTAQDAAWSTRDHLDDPVIGELRNRFGPDAFTVQATRTGIPVVWVKREQLLEVGDFLKKLPKPYVMLFDLHGMDERLRTHRDGLPAADFSVFYHLISIERNRDIMLKVALSENDLRVPTFTKLFPNANWYERETWEMFGIDIEGHPHLTRIMMPQTWEGHPLRKDYPARATEFDPFELTKAKQDLEMEALTFKPEDWGMKRGTDNEDFMFLNLGPNHPSAHGAFRIILQLDGEEIVDCVPDIGYHHRGAEKMGERQSWHSYIPYTDRIEYLGGCVNEMPYVLAVEKLAGITVSDRVNVIRVMLSELFRINSHLLYISTFIQDVGAMTPVFFAFTDRQKIYDLVEAITGFRMHPAWFRIGGVAHDLPRGWDRLLREFLEWMPKRLDSYEKAALRNTILKGRSQGVAAYGAKEALEWGTTGAGLRATGIDFDVRKWRPYSGYENFDFEVPVGGGVSDCYTRVMLKVEELRQSLRILQQCLDNMPEGPFKADHPLTTPPPKERTLQHIETLITHFLQVSWGPVMPAQESFQMVEATKGINSYYLTSDGSTMSYRTRVRTPSFAHLQQIPSAIRGSLVSDLIVYLGSIDFVMSDVDR.

Positions 1–190 (MVNNMTDLTA…DPFELTKAKQ (190 aa)) are NADH dehydrogenase I subunit C. Positions 214-600 (DFMFLNLGPN…IDFVMSDVDR (387 aa)) are NADH dehydrogenase I subunit D.

It in the N-terminal section; belongs to the complex I 30 kDa subunit family. The protein in the C-terminal section; belongs to the complex I 49 kDa subunit family. NDH-1 is composed of 13 different subunits. Subunits NuoB, CD, E, F, and G constitute the peripheral sector of the complex.

Its subcellular location is the cell inner membrane. The catalysed reaction is a quinone + NADH + 5 H(+)(in) = a quinol + NAD(+) + 4 H(+)(out). In terms of biological role, NDH-1 shuttles electrons from NADH, via FMN and iron-sulfur (Fe-S) centers, to quinones in the respiratory chain. The immediate electron acceptor for the enzyme in this species is believed to be ubiquinone. Couples the redox reaction to proton translocation (for every two electrons transferred, four hydrogen ions are translocated across the cytoplasmic membrane), and thus conserves the redox energy in a proton gradient. This is NADH-quinone oxidoreductase subunit C/D from Salmonella paratyphi C (strain RKS4594).